Reading from the N-terminus, the 288-residue chain is ATP synthase gamma chain (288 aa).

It belongs to the ATPase gamma chain family. F-type ATPases have 2 components, CF(1) - the catalytic core - and CF(0) - the membrane proton channel. CF(1) has five subunits: alpha(3), beta(3), gamma(1), delta(1), epsilon(1). CF(0) has three main subunits: a, b and c.

Its subcellular location is the cell inner membrane. Its function is as follows. Produces ATP from ADP in the presence of a proton gradient across the membrane. The gamma chain is believed to be important in regulating ATPase activity and the flow of protons through the CF(0) complex. This is ATP synthase gamma chain from Rickettsia bellii (strain RML369-C).